Consider the following 501-residue polypeptide: MSHRIAPSKERSSSFISILDDETRDTLKANAVMDGEVDVKKTKGKSSRYIPPWTTPYIIGIGGASGSGKTSVAAKIVSSINVPWTVLISLDNFYNPLGPEDRARAFKNEYDFDEPNAINLDLAYKCILNLKEGKRTNIPVYSFVHHNRVPDKNIVIYGASVVVIEGIYALYDRRLLDLMDLKIYVDADLDVCLARRLSRDIVSRGRDLDGCIQQWEKFVKPNAVKFVKPTMKNADAIIPSMSDNATAVNLIINHIKSKLELKSNEHLRELIKLGSSPSQDVLNRNIIHELPPTNQVLSLHTMLLNKNLNCADFVFYFDRLATILLSWALDDIPVAHTNIITPGEHTMENVIACQFDQVTAVNIIRSGDCFMKSLRKTIPNITIGKLLIQSDSQTGEPQLHCEFLPPNIEKFGKVFLMEGQIISGAAMIMAIQVLLDHGIDLEKISVVVYLATEVGIRRILNAFDNKVNIFAGMIISREKLQNHQYKWALTRFFDSKYFGCD.

Ser-17 carries the phosphoserine modification. Residue 63-70 participates in ATP binding; it reads GASGSGKT. Ser-276 carries the phosphoserine modification.

It belongs to the uridine kinase family.

Its subcellular location is the cytoplasm. It is found in the nucleus. The catalysed reaction is uridine + ATP = UMP + ADP + H(+). It catalyses the reaction cytidine + ATP = CMP + ADP + H(+). The protein operates within pyrimidine metabolism; CTP biosynthesis via salvage pathway; CTP from cytidine: step 1/3. It functions in the pathway pyrimidine metabolism; UMP biosynthesis via salvage pathway; UMP from uridine: step 1/1. Catalyzes the conversion of uridine into UMP and cytidine into CMP in the pyrimidine salvage pathway. In Saccharomyces cerevisiae (strain ATCC 204508 / S288c) (Baker's yeast), this protein is Uridine kinase (URK1).